An 82-amino-acid chain; its full sequence is Small ribosomal subunit protein bS18 (82 aa).

The interval 1–24 is disordered; the sequence is MKRTNMKKARMEQSRRPKKNPLKA.

Belongs to the bacterial ribosomal protein bS18 family. Part of the 30S ribosomal subunit. Forms a tight heterodimer with protein bS6.

Binds as a heterodimer with protein bS6 to the central domain of the 16S rRNA, where it helps stabilize the platform of the 30S subunit. This Corynebacterium jeikeium (strain K411) protein is Small ribosomal subunit protein bS18.